The following is a 701-amino-acid chain: Acetyl-coenzyme A synthetase, cytoplasmic (701 aa).

Residues 1–41 are disordered; that stretch reads MGLPEERVRSGSGSRGQEEAGAGGRARSWSPPPEVSRSAHV. The segment at 1–107 is interaction with TFEB; the sequence is MGLPEERVRS…GATTNICYNV (107 aa). Phosphoserine occurs at positions 28, 30, and 36. CoA is bound at residue 219–222; sequence RGEK. 3 positions are modified to phosphoserine: Ser263, Ser265, and Ser267. Thr363 is a CoA binding site. Lys418 is subject to N6-acetyllysine. ATP contacts are provided by residues 439-441, 463-468, Asp552, and Arg567; these read GEP and DTFWQT. 2 residues coordinate CoA: Ser575 and Arg636. Positions 656 to 668 match the Nuclear localization signal motif; sequence KTRSGKIMRRVLR. Phosphoserine; by AMPK is present on Ser659. At Lys661 the chain carries N6-acetyllysine.

The protein belongs to the ATP-dependent AMP-binding enzyme family. Monomer. Interacts with TFEB. AMPK-mediated phosphorylated form at Ser-659 interacts with KPNA1; this interaction results in nuclear translocation of ACSS2. Interacts with the 'Thr-172' phosphorylated form of PRKAA2. Interacts with CREBBP. Reversibly acetylated at Lys-661. The acetyl-CoA synthase activity is inhibited by acetylation and activated by deacetylation mediated by the deacetylases SIRT1 and SIRT3. Post-translationally, glucose deprivation results in its AMPK-dependent phosphorylation at Ser-659, which leads to exposure of its nuclear localization signal, required for its interaction with KPNA1 and subsequent translocation to the nucleus.

It localises to the cytoplasm. The protein localises to the cytosol. It is found in the nucleus. It carries out the reaction acetate + ATP + CoA = acetyl-CoA + AMP + diphosphate. The enzyme catalyses propanoate + ATP + CoA = propanoyl-CoA + AMP + diphosphate. Inhibited by acetylation at Lys-661 and activated by deacetylation mediated by the deacetylases SIRT1 and SIRT3. Its function is as follows. Catalyzes the synthesis of acetyl-CoA from short-chain fatty acids. Acetate is the preferred substrate. Can also utilize propionate with a much lower affinity. Nuclear ACSS2 promotes glucose deprivation-induced lysosomal biogenesis and autophagy, tumor cell survival and brain tumorigenesis. Glucose deprivation results in AMPK-mediated phosphorylation of ACSS2 leading to its translocation to the nucleus where it binds to TFEB and locally produces acetyl-CoA for histone acetylation in the promoter regions of TFEB target genes thereby activating their transcription. The regulation of genes associated with autophagy and lysosomal activity through ACSS2 is important for brain tumorigenesis and tumor survival. Acts as a chromatin-bound transcriptional coactivator that up-regulates histone acetylation and expression of neuronal genes. Can be recruited to the loci of memory-related neuronal genes to maintain a local acetyl-CoA pool, providing the substrate for histone acetylation and promoting the expression of specific genes, which is essential for maintaining long-term spatial memory. This Homo sapiens (Human) protein is Acetyl-coenzyme A synthetase, cytoplasmic (ACSS2).